A 1331-amino-acid chain; its full sequence is Contactin-associated protein-like 2 (1331 aa).

The first 27 residues, 1-27, serve as a signal peptide directing secretion; that stretch reads MQAAPRAGCGAALLLWIVSSCLCRAWT. Residues 28–1262 lie on the Extracellular side of the membrane; the sequence is APSTSQKCDE…IRNGVNRNSA (1235 aa). The F5/8 type C domain maps to 35 to 181; the sequence is CDEPLVSGLP…IGLRIEVYGC (147 aa). Cysteine 35 and cysteine 181 are disulfide-bonded. The 153-residue stretch at 216–368 folds into the Laminin G-like 1 domain; the sequence is FKTSESEGVI…SNVGNLSFSC (153 aa). Residues asparagine 289, asparagine 346, asparagine 363, asparagine 379, asparagine 436, asparagine 506, asparagine 507, and asparagine 546 are each glycosylated (N-linked (GlcNAc...) asparagine). Cysteines 336 and 368 form a disulfide. One can recognise a Laminin G-like 2 domain in the interval 401–552; it reads FRTWNPNGLL…SFANVSIDMC (152 aa). Intrachain disulfides connect cysteine 520/cysteine 552, cysteine 558/cysteine 569, cysteine 563/cysteine 578, and cysteine 580/cysteine 590. Residues 554–591 enclose the EGF-like 1 domain; that stretch reads IIDRCVPNHCEHGGKCSQTWDSFKCTCDETGYSGATCH. The region spanning 592 to 798 is the Fibrinogen C-terminal domain; the sequence is NSIYEPSCEA…LRCQGDRNYW (207 aa). Residues asparagine 630 and asparagine 735 are each glycosylated (N-linked (GlcNAc...) asparagine). The Laminin G-like 3 domain occupies 799–963; that stretch reads NAASFPNPSS…KVTSGFISGC (165 aa). 4 cysteine pairs are disulfide-bonded: cysteine 936-cysteine 963, cysteine 967-cysteine 980, cysteine 974-cysteine 989, and cysteine 991-cysteine 1001. An EGF-like 2 domain is found at 963–1002; the sequence is CSGHCTSYGTNCENGGKCLERYHGYSCDCSNTAYDGTFCN. Residues 1026–1045 form a disordered region; it reads ARDSSSRVDNAPDQQNSHPD. The region spanning 1055 to 1214 is the Laminin G-like 4 domain; that stretch reads FSTTKAPCIL…IQGELVESNC (160 aa). 2 N-linked (GlcNAc...) asparagine glycosylation sites follow: asparagine 1116 and asparagine 1198. Cysteine 1178 and cysteine 1214 are joined by a disulfide. The chain crosses the membrane as a helical span at residues 1263-1283; the sequence is IIGGVIAVVIFTILCTLVFLI. Over 1284 to 1331 the chain is Cytoplasmic; the sequence is RYMFRHKGTYHTNEAKGAESAESADAAIMNNDPNFTETIDESKKEWLI. A phosphoserine mark is found at serine 1303 and serine 1306.

It belongs to the neurexin family. Interacts (via C-terminus) with KCNA2. Interacts with GPR37. Predominantly expressed in nervous system.

The protein localises to the membrane. It localises to the cell projection. The protein resides in the axon. Its subcellular location is the cell junction. It is found in the paranodal septate junction. Required for gap junction formation. Required, with CNTNAP1, for radial and longitudinal organization of myelinated axons. Plays a role in the formation of functional distinct domains critical for saltatory conduction of nerve impulses in myelinated nerve fibers. Demarcates the juxtaparanodal region of the axo-glial junction. This chain is Contactin-associated protein-like 2 (CNTNAP2), found in Homo sapiens (Human).